A 196-amino-acid polypeptide reads, in one-letter code: ATP-dependent Clp protease proteolytic subunit (196 aa).

Ser-98 acts as the Nucleophile in catalysis. Residue His-123 is part of the active site.

The protein belongs to the peptidase S14 family. Fourteen ClpP subunits assemble into 2 heptameric rings which stack back to back to give a disk-like structure with a central cavity, resembling the structure of eukaryotic proteasomes.

The protein resides in the cytoplasm. It catalyses the reaction Hydrolysis of proteins to small peptides in the presence of ATP and magnesium. alpha-casein is the usual test substrate. In the absence of ATP, only oligopeptides shorter than five residues are hydrolyzed (such as succinyl-Leu-Tyr-|-NHMec, and Leu-Tyr-Leu-|-Tyr-Trp, in which cleavage of the -Tyr-|-Leu- and -Tyr-|-Trp bonds also occurs).. Its function is as follows. Cleaves peptides in various proteins in a process that requires ATP hydrolysis. Has a chymotrypsin-like activity. Plays a major role in the degradation of misfolded proteins. ClpXP is involved in the complete degradation of the Site-2 clipped anti-sigma-W factor RsiW. This results in the release of SigW and the transcription activation of the genes under the control of the sigma-W factor. The chain is ATP-dependent Clp protease proteolytic subunit from Geobacillus kaustophilus (strain HTA426).